Consider the following 99-residue polypeptide: High mobility group protein I (99 aa).

A disordered region spans residues 1–99 (MSDSPVKKGR…ADTEEVNSSD (99 aa)). Serine 4 is subject to Phosphoserine; by CDC2 and MAPK. A DNA-binding region (a.T hook 1) is located at residues 7 to 19 (KKGRGRPAKAKPE). Residues 16 to 46 (AKPEETASPKAAKKEEKKVEEVPKKIEESTK) are compositionally biased toward basic and acidic residues. Position 23 is a phosphoserine; by MAPK (serine 23). The segment at residues 54–66 (KKGRGRPSKGDKA) is a DNA-binding region (a.T hook 2). Position 73 is a phosphoserine; by PKC (serine 73). The a.T hook 3 DNA-binding region spans 74-86 (GKGRGRPAKNAKK). The segment covering 90–99 (ADTEEVNSSD) has biased composition (acidic residues).

Belongs to the HMGA family. Post-translationally, phosphorylated in a cell-cycle dependent manner; substantially reduced in cells that have finished proliferating and are differentiated. Phosphorylation at Ser-4 and Ser-23 results in a 10-fold weakening of DNA-binding activity and altered the mode of protein-DNA interaction.

Its subcellular location is the nucleus. It localises to the nucleolus. It is found in the chromosome. Binds preferentially to the minor groove of A+T rich regions in double-stranded DNA via the second and third DBA-binding domains. It is suggested that these proteins could function in nucleosome phasing and in the 3'-end processing of mRNA transcripts. They are also involved in the transcription regulation of genes containing, or in close proximity to A+T-rich regions. This is High mobility group protein I from Chironomus tentans (Midge).